The following is a 709-amino-acid chain: DCC-interacting protein 13-alpha (709 aa).

The tract at residues methionine 1–serine 428 is required for RAB5A binding. The BAR domain occupies glycine 3 to proline 268. Residues serine 215–aspartate 259 adopt a coiled-coil conformation. Residues leucine 277–lysine 375 form the PH domain. Disordered regions lie at residues alanine 397–glutamate 434, glycine 467–serine 491, and valine 645–alanine 709. Threonine 399 bears the Phosphothreonine mark. Serine 401 carries the post-translational modification Phosphoserine. A F&amp;H motif is present at residues serine 403–alanine 414. Serine 410 carries the phosphoserine; by PKA modification. One can recognise a PID domain in the interval serine 496–glutamine 656. Residues leucine 621–serine 673 are a coiled coil. Over residues valine 645–serine 667 the composition is skewed to basic and acidic residues. Polar residues predominate over residues serine 674–serine 693. A phosphoserine mark is found at serine 693 and serine 696. Residues glutamate 700–alanine 709 show a composition bias toward basic and acidic residues.

As to quaternary structure, homodimer. Binds RAB5A/Rab5 through an N-terminal domain. This interaction is essential for its recruitment to endosomal membranes as well as its role in cell proliferation. Binds DCC and the catalytic domain of the inactive form of AKT2 through its PID domain. Binds PIK3CA and subunits of the NuRD/MeCP1 complex. Interacts with OCRL and INPP5B. Interacts with NTRK2. Interacts with APPL2; interaction is independent of follicle stimulating hormone stimulation; interaction is decreased by adiponectin in a time-dependent manner. Forms a complex with APPL2 and RUVBL2. Forms a complex comprising APPL2, RUVBL2, CTNNB1, HDAC1 and HDAC2; interaction reduces interaction between CTNNB1, HDAC1, HDAC2 and RUVBL2 leading to the decrease of deacetylase activity of this complex; affects the recruitment of repressive complexes to the Wnt target genes. Interacts with ANXA2. Interacts with TGFBR1; interaction is TGF beta dependent; mediates trafficking of the TGFBR1 from the endosomes to the nucleus via microtubules in a TRAF6-dependent manner. Interacts with PRKCZ. Interacts with PIK3R1 and APPL2. Interacts with ADIPOR1; ADIPOQ enhances this interaction; inhibites adiponectin-stimulated binding of APPL2 to ADIPOR1. In terms of processing, phosphorylation at Ser-410 by PKA severely impairs binding to OCRL. As to expression, high levels in heart, ovary, pancreas and skeletal muscle.

Its subcellular location is the early endosome membrane. The protein localises to the nucleus. The protein resides in the cytoplasm. It is found in the endosome. It localises to the cell projection. Its subcellular location is the ruffle. The protein localises to the cytoplasmic vesicle. The protein resides in the phagosome. Its function is as follows. Multifunctional adapter protein that binds to various membrane receptors, nuclear factors and signaling proteins to regulate many processes, such as cell proliferation, immune response, endosomal trafficking and cell metabolism. Regulates signaling pathway leading to cell proliferation through interaction with RAB5A and subunits of the NuRD/MeCP1 complex. Functions as a positive regulator of innate immune response via activation of AKT1 signaling pathway by forming a complex with APPL1 and PIK3R1. Inhibits Fc-gamma receptor-mediated phagocytosis through PI3K/Akt signaling in macrophages. Regulates TLR4 signaling in activated macrophages. Involved in trafficking of the TGFBR1 from the endosomes to the nucleus via microtubules in a TRAF6-dependent manner. Plays a role in cell metabolism by regulating adiponecting and insulin signaling pathways. Required for fibroblast migration through HGF cell signaling. Positive regulator of beta-catenin/TCF-dependent transcription through direct interaction with RUVBL2/reptin resulting in the relief of RUVBL2-mediated repression of beta-catenin/TCF target genes by modulating the interactions within the beta-catenin-reptin-HDAC complex. This Homo sapiens (Human) protein is DCC-interacting protein 13-alpha.